Here is a 346-residue protein sequence, read N- to C-terminus: Very-long-chain 3-oxoacyl-CoA reductase (346 aa).

A helical membrane pass occupies residues 19–39; it reads LIYGVLFVGVYKITTFTLSVG. NADP(+)-binding residues include V65, D119, N146, Y220, K224, V253, and S255. The Proton donor role is filled by Y220. Catalysis depends on K224, which acts as the Lowers pKa of active site Tyr.

It belongs to the short-chain dehydrogenases/reductases (SDR) family.

The protein resides in the endoplasmic reticulum membrane. The catalysed reaction is a very-long-chain (3R)-3-hydroxyacyl-CoA + NADP(+) = a very-long-chain 3-oxoacyl-CoA + NADPH + H(+). It participates in lipid metabolism; fatty acid biosynthesis. In terms of biological role, component of the microsomal membrane bound fatty acid elongation system, which produces the 26-carbon very long-chain fatty acids (VLCFA) from palmitate. Catalyzes the reduction of the 3-ketoacyl-CoA intermediate that is formed in each cycle of fatty acid elongation. VLCFAs serve as precursors for ceramide and sphingolipids. The chain is Very-long-chain 3-oxoacyl-CoA reductase from Debaryomyces hansenii (strain ATCC 36239 / CBS 767 / BCRC 21394 / JCM 1990 / NBRC 0083 / IGC 2968) (Yeast).